The primary structure comprises 82 residues: MKLLLLLIVSASMLIESLVNADGYIRKRDGCKLSCLFGNEGCNKECKSYGGSYGYCWTWGLACWCEGLPDDKTWKSETNTCG.

Positions 1-21 (MKLLLLLIVSASMLIESLVNA) are cleaved as a signal peptide. The 61-residue stretch at 22-82 (DGYIRKRDGC…TWKSETNTCG (61 aa)) folds into the LCN-type CS-alpha/beta domain. Cystine bridges form between cysteine 31–cysteine 81, cysteine 35–cysteine 56, cysteine 42–cysteine 63, and cysteine 46–cysteine 65.

The protein belongs to the long (4 C-C) scorpion toxin superfamily. Sodium channel inhibitor family. Beta subfamily. Expressed by the venom gland.

The protein localises to the secreted. Its function is as follows. Depressant insect beta-toxins cause a transient contraction paralysis followed by a slow flaccid paralysis. They bind voltage-independently at site-4 of sodium channels and shift the voltage of activation toward more negative potentials thereby affecting sodium channel activation and promoting spontaneous and repetitive firing. Aside from typical beta-toxin effects, this toxin also affects the inactivation process and ion selectivity of the insect voltage-gated sodium channel. This toxin is active only on insects. Is active on the insect voltage-gated sodium channel para. In vivo, when injected intraperitoneally, it exhibits analgesic activity, increasing hot plate and tail flick withdrawal latencies in a dose-dependent fashion. This phenomenon might be partly due to an inhibitory mechanism activated by noxious stimuli. This chain is Beta-insect depressant toxin LqqIT2, found in Leiurus quinquestriatus quinquestriatus (Egyptian scorpion).